The sequence spans 255 residues: tRNA (guanine-N(1)-)-methyltransferase (255 aa).

S-adenosyl-L-methionine contacts are provided by residues Gly113 and Ile133 to Leu138.

This sequence belongs to the RNA methyltransferase TrmD family. In terms of assembly, homodimer.

The protein localises to the cytoplasm. It catalyses the reaction guanosine(37) in tRNA + S-adenosyl-L-methionine = N(1)-methylguanosine(37) in tRNA + S-adenosyl-L-homocysteine + H(+). Specifically methylates guanosine-37 in various tRNAs. The polypeptide is tRNA (guanine-N(1)-)-methyltransferase (Serratia proteamaculans (strain 568)).